Reading from the N-terminus, the 1364-residue chain is Formin-like protein 6 (1364 aa).

The region spanning 9 to 193 is the Phosphatase tensin-type domain; that stretch reads YRKPPDGLLE…HYISRRNVSA (185 aa). C126 serves as the catalytic Phosphocysteine intermediate. The C2 tensin-type domain maps to 199–338; sequence DRALTLDCVI…FRAEVLFSEM (140 aa). Disordered regions lie at residues 614 to 934, 976 to 999, and 1317 to 1364; these read KCTP…NLKP, VLPS…KPEK, and EAEA…ASAK. Over residues 617 to 631 the composition is skewed to pro residues; that stretch reads PSPPPLLPPLAPVVP. Residues 657 to 690 are compositionally biased toward polar residues; that stretch reads SFPSLSPTQQKQSTSKLCQTILPTNHQLSSSNIT. Over residues 734–743 the composition is skewed to pro residues; sequence PPAPPPPPLQ. Over residues 744–757 the composition is skewed to low complexity; sequence SPSTPRCSPVRTLA. Pro residues-rich tracts occupy residues 774–813 and 856–865; these read GPPP…PAAP and PSPPPPPPPC. Positions 916–929 are enriched in polar residues; the sequence is MSRSLQSGQAASRR. Residues 922–1322 form the FH2 domain; that stretch reads SGQAASRRSN…KALKEAEAEK (401 aa). The segment covering 1317 to 1351 has biased composition (basic and acidic residues); the sequence is EAEAEKTKKEPENAQKTKEPGNDKAKHNNSIKELD. A compositionally biased stretch (polar residues) spans 1353–1364; sequence SLQSPAQTASAK.

The protein belongs to the formin-like family. Class-II subfamily.

This is Formin-like protein 6 (FH6) from Oryza sativa subsp. japonica (Rice).